We begin with the raw amino-acid sequence, 690 residues long: Elongation factor G (690 aa).

Positions 8–283 constitute a tr-type G domain; the sequence is EDYRNFGIMA…AVVDYLPSPV (276 aa). GTP contacts are provided by residues 17 to 24, 81 to 85, and 135 to 138; these read AHIDAGKT, DTPGH, and NKMD.

This sequence belongs to the TRAFAC class translation factor GTPase superfamily. Classic translation factor GTPase family. EF-G/EF-2 subfamily.

The protein localises to the cytoplasm. In terms of biological role, catalyzes the GTP-dependent ribosomal translocation step during translation elongation. During this step, the ribosome changes from the pre-translocational (PRE) to the post-translocational (POST) state as the newly formed A-site-bound peptidyl-tRNA and P-site-bound deacylated tRNA move to the P and E sites, respectively. Catalyzes the coordinated movement of the two tRNA molecules, the mRNA and conformational changes in the ribosome. The polypeptide is Elongation factor G (Rhodopseudomonas palustris (strain BisA53)).